The primary structure comprises 385 residues: Putative ESX-1 scaffolding and assembly protein SaeC (385 aa).

The protein localises to the cytoplasm. In terms of biological role, may be involved in assembly of the ESX-1 / type VII specialized secretion system (T7SS), which exports several proteins including EsxA and EsxB. Involved in DNA conjugation in recipient (MKD8) strain. The chain is Putative ESX-1 scaffolding and assembly protein SaeC from Mycolicibacterium smegmatis (strain ATCC 700084 / mc(2)155) (Mycobacterium smegmatis).